The chain runs to 456 residues: Bifunctional protein GlmU (456 aa).

Residues 1-229 (MSNSSMSVVI…LSEVEGVNNR (229 aa)) form a pyrophosphorylase region. UDP-N-acetyl-alpha-D-glucosamine-binding positions include 11 to 14 (LAAG), Lys-25, Gln-76, 81 to 82 (GT), 103 to 105 (YGD), Gly-140, Glu-154, Asn-169, and Asn-227. Asp-105 serves as a coordination point for Mg(2+). A Mg(2+)-binding site is contributed by Asn-227. Positions 230 to 250 (LQLSALERVFQTEQAEKLLLA) are linker. The segment at 251 to 456 (GVMLLDPSRF…QGWKRPVKKK (206 aa)) is N-acetyltransferase. The UDP-N-acetyl-alpha-D-glucosamine site is built by Arg-333 and Lys-351. The Proton acceptor role is filled by His-363. UDP-N-acetyl-alpha-D-glucosamine is bound by residues Tyr-366 and Asn-377. Residues Ala-380, 386–387 (NY), Ser-405, Ala-423, and Arg-440 each bind acetyl-CoA.

In the N-terminal section; belongs to the N-acetylglucosamine-1-phosphate uridyltransferase family. It in the C-terminal section; belongs to the transferase hexapeptide repeat family. As to quaternary structure, homotrimer. Mg(2+) is required as a cofactor.

It is found in the cytoplasm. It carries out the reaction alpha-D-glucosamine 1-phosphate + acetyl-CoA = N-acetyl-alpha-D-glucosamine 1-phosphate + CoA + H(+). It catalyses the reaction N-acetyl-alpha-D-glucosamine 1-phosphate + UTP + H(+) = UDP-N-acetyl-alpha-D-glucosamine + diphosphate. It functions in the pathway nucleotide-sugar biosynthesis; UDP-N-acetyl-alpha-D-glucosamine biosynthesis; N-acetyl-alpha-D-glucosamine 1-phosphate from alpha-D-glucosamine 6-phosphate (route II): step 2/2. Its pathway is nucleotide-sugar biosynthesis; UDP-N-acetyl-alpha-D-glucosamine biosynthesis; UDP-N-acetyl-alpha-D-glucosamine from N-acetyl-alpha-D-glucosamine 1-phosphate: step 1/1. The protein operates within bacterial outer membrane biogenesis; LPS lipid A biosynthesis. In terms of biological role, catalyzes the last two sequential reactions in the de novo biosynthetic pathway for UDP-N-acetylglucosamine (UDP-GlcNAc). The C-terminal domain catalyzes the transfer of acetyl group from acetyl coenzyme A to glucosamine-1-phosphate (GlcN-1-P) to produce N-acetylglucosamine-1-phosphate (GlcNAc-1-P), which is converted into UDP-GlcNAc by the transfer of uridine 5-monophosphate (from uridine 5-triphosphate), a reaction catalyzed by the N-terminal domain. The protein is Bifunctional protein GlmU of Yersinia pseudotuberculosis serotype O:1b (strain IP 31758).